The sequence spans 360 residues: GDSL esterase/lipase At2g31550 (360 aa).

Positions 1–27 (MSTSKAITLTLFITTTLLASCDAAANA) are cleaved as a signal peptide. An N-linked (GlcNAc...) asparagine glycan is attached at asparagine 26. Serine 42 acts as the Nucleophile in catalysis. Asparagine 104 and asparagine 326 each carry an N-linked (GlcNAc...) asparagine glycan. Active-site residues include aspartate 334 and histidine 337.

Belongs to the 'GDSL' lipolytic enzyme family.

Its subcellular location is the secreted. This is GDSL esterase/lipase At2g31550 from Arabidopsis thaliana (Mouse-ear cress).